The sequence spans 68 residues: Conotoxin Cal14.13a (68 aa).

The N-terminal stretch at 1–21 (MKLCVVIVLLMLAMPFNGGEA) is a signal peptide. Positions 22 to 38 (SRFFNQHARSQRSGMKT) are excised as a propeptide. Valine 66 is modified (valine amide).

Post-translationally, contains 2 disulfide bonds. Expressed by the venom duct.

The protein resides in the secreted. Its function is as follows. Probable neurotoxin with unknown target. Possibly targets ion channels. The sequence is that of Conotoxin Cal14.13a from Californiconus californicus (California cone).